Consider the following 244-residue polypeptide: Krueppel-like factor 9 (244 aa).

2 disordered regions span residues 26 to 51 (EHGG…GDPG) and 79 to 143 (PSVC…EKRH). Over residues 32–51 (EAERLRLPEREVTKEHGDPG) the composition is skewed to basic and acidic residues. Position 122 is a phosphoserine (serine 122). Over residues 134–143 (KGKHASEKRH) the composition is skewed to basic residues. 3 C2H2-type zinc fingers span residues 143 to 167 (HKCP…YRVH), 173 to 197 (FPCT…YRTH), and 203 to 225 (FRCP…ARRH).

Belongs to the Sp1 C2H2-type zinc-finger protein family. In terms of assembly, interacts with ZZEF1.

The protein localises to the nucleus. Transcription factor that binds to GC box promoter elements. Selectively activates mRNA synthesis from genes containing tandem repeats of GC boxes but represses genes with a single GC box. Acts as an epidermal circadian transcription factor regulating keratinocyte proliferation. The polypeptide is Krueppel-like factor 9 (Klf9) (Mus musculus (Mouse)).